The primary structure comprises 201 residues: Envelope glycoprotein (201 aa).

Residues R1–L148 lie on the Extracellular side of the membrane. Residues V10 to V30 form a fusion peptide region. Residues A39–V75 are a coiled coil. The interval L76–L92 is immunosuppression. Residues C93 to C101 carry the CX6CC motif. The helical transmembrane segment at I149–I169 threads the bilayer. The S-palmitoyl cysteine; by host moiety is linked to residue C168. Residues L170–D201 lie on the Cytoplasmic side of the membrane. A YXXL motif; contains endocytosis signal motif is present at residues Y193–L196.

The mature envelope protein (Env) consists of a trimer of SU-TM heterodimers attached by a labile interchain disulfide bond. In terms of processing, specific enzymatic cleavages in vivo yield mature proteins. Envelope glycoproteins are synthesized as an inactive precursor that is N-glycosylated and processed likely by host cell furin or by a furin-like protease in the Golgi to yield the mature SU and TM proteins. The cleavage site between SU and TM requires the minimal sequence [KR]-X-[KR]-R. The R-peptide is released from the C-terminus of the cytoplasmic tail of the TM protein upon particle formation as a result of proteolytic cleavage by the viral protease. Cleavage of this peptide is required for TM to become fusogenic. Post-translationally, the transmembrane protein is palmitoylated. The R-peptide is palmitoylated.

It is found in the virion membrane. The protein resides in the host cell membrane. In terms of biological role, the surface protein (SU) attaches the virus to the host cell by binding to its receptor. This interaction triggers the refolding of the transmembrane protein (TM) and is thought to activate its fusogenic potential by unmasking its fusion peptide. Fusion occurs at the host cell plasma membrane. The transmembrane protein (TM) acts as a class I viral fusion protein. Under the current model, the protein has at least 3 conformational states: pre-fusion native state, pre-hairpin intermediate state, and post-fusion hairpin state. During viral and target cell membrane fusion, the coiled coil regions (heptad repeats) assume a trimer-of-hairpins structure, positioning the fusion peptide in close proximity to the C-terminal region of the ectodomain. The formation of this structure appears to drive apposition and subsequent fusion of viral and target cell membranes. Membranes fusion leads to delivery of the nucleocapsid into the cytoplasm. The chain is Envelope glycoprotein (env) from Mus musculus (Mouse).